Here is a 1040-residue protein sequence, read N- to C-terminus: Alpha-mannosidase 2C1 (1040 aa).

Co(2+) contacts are provided by His-260, Asp-262, Asp-372, and His-577. The active-site Nucleophile is Asp-372.

The protein belongs to the glycosyl hydrolase 38 family. It depends on Co(2+) as a cofactor.

It localises to the cytoplasm. It catalyses the reaction Hydrolysis of terminal, non-reducing alpha-D-mannose residues in alpha-D-mannosides.. Its activity is regulated as follows. Strongly inhibited by swainsonine. Also inhibited to a lesser extent by deoxymannojirimycin (DMM). Functionally, cleaves alpha 1,2-, alpha 1,3-, and alpha 1,6-linked mannose residues on cytoplasmic free oligosaccharides generated by N-glycoprotein degradation pathways. This Homo sapiens (Human) protein is Alpha-mannosidase 2C1 (MAN2C1).